The chain runs to 530 residues: Cation transporter HKT2;2 (530 aa).

Residues 1 to 40 (MTSIYQEFIHTKCQSFRSIGRYVLHSIVLIYRFVSLHVHP) are Cytoplasmic-facing. 2 consecutive transmembrane segments (helical) span residues 41–61 (FWIQ…LLMF) and 102–122 (IVVL…FLGL). The Cytoplasmic segment spans residues 123 to 186 (MLRLKHKHNP…DLKRSKRLRW (64 aa)). 2 consecutive transmembrane segments (helical) span residues 187–207 (FLGF…FLLV) and 260–280 (GLLL…PLFL). At 281 to 317 (RILIWFLGKVTKLKDLKLMIKNSDELQYDYLLPKLPT) the chain is on the cytoplasmic side. Transmembrane regions (helical) follow at residues 318–338 (AFLA…FGSV) and 372–392 (IDCS…MYLP). The Cytoplasmic segment spans residues 393-420 (PSTTFALSNGDEKTANKKAKRKLGLVVR). 2 helical membrane passes run 421 to 441 (NLAF…LITE) and 494 to 514 (SLSG…MLYG). The Cytoplasmic segment spans residues 515–530 (RLKAFTKGTGEYWRLW).

The protein belongs to the TrkH potassium transport family. HKT (TC 2.A.38.3) subfamily.

The protein localises to the membrane. Functionally, seems to be involved in regulation of potassium-sodium homeostasis. Seems to act as a potassium-sodium cotransporter, which mediates increased potassium uptake under external sodium accumulation and contributes to salt-tolerance in cultivar indica Pokkali. This is Cation transporter HKT2;2 from Oryza sativa subsp. indica (Rice).